Consider the following 157-residue polypeptide: Nascent polypeptide-associated complex subunit beta (157 aa).

The segment at 1 to 31 (MPVDPEKLAKLQKSTAKKVGGSRVKAKKGVK) is disordered. Positions 33–98 (EQDDTKLIET…PQEKNITQLI (66 aa)) constitute an NAC-A/B domain. A disordered region spans residues 125 to 157 (NPKDFGAAGEAGATEEANEDIPDLVDQKFDDVE). The span at 130–139 (GAAGEAGATE) shows a compositional bias: low complexity.

This sequence belongs to the NAC-beta family. As to quaternary structure, part of the nascent polypeptide-associated complex (NAC), consisting of EGD2 and EGD1. NAC associates with ribosomes via EGD1.

Its subcellular location is the cytoplasm. The protein localises to the nucleus. Component of the nascent polypeptide-associated complex (NAC), a dynamic component of the ribosomal exit tunnel, protecting the emerging polypeptides from interaction with other cytoplasmic proteins to ensure appropriate nascent protein targeting. The NAC complex also promotes mitochondrial protein import by enhancing productive ribosome interactions with the outer mitochondrial membrane and blocks the inappropriate interaction of ribosomes translating non-secretory nascent polypeptides with translocation sites in the membrane of the endoplasmic reticulum. EGD1 may act as a transcription factor that exert a negative effect on the expression of several genes that are transcribed by RNA polymerase II. This chain is Nascent polypeptide-associated complex subunit beta (EGD1), found in Lodderomyces elongisporus (strain ATCC 11503 / CBS 2605 / JCM 1781 / NBRC 1676 / NRRL YB-4239) (Yeast).